The chain runs to 314 residues: MSKVKVAIIGSGNIGTDLMIKVLRNSDYLEMGAMVGIDPASDGLARAARLNVPITAEGVEGLIGLPNFDEIEIVFDATSAKAHVANNARLAPLGKRMIDLTPAAIGPYVVPAVNADEHLDAPNVNMVTCGGQATIPMVAAVSRVVPVAYAEIVASIASKSAGPGTRANIDEFTETTSEAIVAVGGARRGKAIIILNPAEPPLIMRDTVFCLVDAPDPAVHEEIRQSIEKMVGDVSAYVPGYRLKQEVQITEIPADQPVETLLVDGNRPTHQVSVFLEVEGAAHYLPAYAGNLDIMTSAGMQIAERIAQQKEATK.

11–14 (SGNI) is an NAD(+) binding site. Cys129 (acyl-thioester intermediate) is an active-site residue. NAD(+)-binding positions include 160–168 (SAGPGTRAN) and Asn291.

This sequence belongs to the acetaldehyde dehydrogenase family.

The enzyme catalyses acetaldehyde + NAD(+) + CoA = acetyl-CoA + NADH + H(+). This chain is Acetaldehyde dehydrogenase 2, found in Rhodococcus erythropolis (strain PR4 / NBRC 100887).